The following is a 155-amino-acid chain: Small ribosomal subunit protein uS7 (155 aa).

The protein belongs to the universal ribosomal protein uS7 family. Part of the 30S ribosomal subunit. Contacts proteins S9 and S11.

Functionally, one of the primary rRNA binding proteins, it binds directly to 16S rRNA where it nucleates assembly of the head domain of the 30S subunit. Is located at the subunit interface close to the decoding center, probably blocks exit of the E-site tRNA. The sequence is that of Small ribosomal subunit protein uS7 from Halorhodospira halophila (strain DSM 244 / SL1) (Ectothiorhodospira halophila (strain DSM 244 / SL1)).